Consider the following 351-residue polypeptide: Photosystem II D2 protein (351 aa).

The helical transmembrane segment at 39 to 59 threads the bilayer; sequence CAYLAVGGWLTGTTFVTSWYT. His116 serves as a coordination point for chlorophyll a. Residues 123–139 traverse the membrane as a helical segment; it reads GFCLRQFEIARLVGLRP. The pheophytin a site is built by Gln128 and Asn141. Residues 151 to 164 form a helical membrane-spanning segment; it reads VFVSVFLMYPLGQA. His196 lines the chlorophyll a pocket. A helical transmembrane segment spans residues 206 to 226; that stretch reads GALLCAIHGATVQNTLFEDGD. Residues His213 and Phe260 each coordinate a plastoquinone. Residue His213 participates in Fe cation binding. His267 is a binding site for Fe cation. A helical membrane pass occupies residues 277–293; that stretch reads GLWTSAFGIVGLALNLR.

Belongs to the reaction center PufL/M/PsbA/D family. PSII is composed of 1 copy each of membrane proteins PsbA, PsbB, PsbC, PsbD, PsbE, PsbF, PsbH, PsbI, PsbJ, PsbK, PsbL, PsbM, PsbT, PsbX, PsbY, PsbZ, Psb30/Ycf12, at least 3 peripheral proteins of the oxygen-evolving complex and a large number of cofactors. It forms dimeric complexes. The D1/D2 heterodimer binds P680, chlorophylls that are the primary electron donor of PSII, and subsequent electron acceptors. It shares a non-heme iron and each subunit binds pheophytin, quinone, additional chlorophylls, carotenoids and lipids. There is also a Cl(-1) ion associated with D1 and D2, which is required for oxygen evolution. The PSII complex binds additional chlorophylls, carotenoids and specific lipids. serves as cofactor.

It localises to the plastid. Its subcellular location is the chloroplast thylakoid membrane. It carries out the reaction 2 a plastoquinone + 4 hnu + 2 H2O = 2 a plastoquinol + O2. Its function is as follows. Photosystem II (PSII) is a light-driven water:plastoquinone oxidoreductase that uses light energy to abstract electrons from H(2)O, generating O(2) and a proton gradient subsequently used for ATP formation. It consists of a core antenna complex that captures photons, and an electron transfer chain that converts photonic excitation into a charge separation. The D1/D2 (PsbA/PsbD) reaction center heterodimer binds P680, the primary electron donor of PSII as well as several subsequent electron acceptors. D2 is needed for assembly of a stable PSII complex. In Porphyra purpurea (Red seaweed), this protein is Photosystem II D2 protein.